The chain runs to 450 residues: Tubulin alpha chain (450 aa).

GTP is bound at residue glutamine 11. Lysine 40 carries the N6-acetyllysine modification. Residues glutamate 71, serine 140, glycine 144, threonine 145, threonine 179, asparagine 206, and asparagine 228 each contribute to the GTP site. A Mg(2+)-binding site is contributed by glutamate 71. Glutamate 254 is a catalytic residue.

It belongs to the tubulin family. In terms of assembly, dimer of alpha and beta chains. A typical microtubule is a hollow water-filled tube with an outer diameter of 25 nm and an inner diameter of 15 nM. Alpha-beta heterodimers associate head-to-tail to form protofilaments running lengthwise along the microtubule wall with the beta-tubulin subunit facing the microtubule plus end conferring a structural polarity. Microtubules usually have 13 protofilaments but different protofilament numbers can be found in some organisms and specialized cells. It depends on Mg(2+) as a cofactor. Undergoes a tyrosination/detyrosination cycle, the cyclic removal and re-addition of a C-terminal tyrosine residue by the enzymes tubulin tyrosine carboxypeptidase (TTCP) and tubulin tyrosine ligase (TTL), respectively. In terms of processing, acetylation of alpha chains at Lys-40 stabilizes microtubules and affects affinity and processivity of microtubule motors. This modification has a role in multiple cellular functions, ranging from cell motility, cell cycle progression or cell differentiation to intracellular trafficking and signaling.

It is found in the cytoplasm. Its subcellular location is the cytoskeleton. The catalysed reaction is GTP + H2O = GDP + phosphate + H(+). Functionally, tubulin is the major constituent of microtubules, a cylinder consisting of laterally associated linear protofilaments composed of alpha- and beta-tubulin heterodimers. Microtubules grow by the addition of GTP-tubulin dimers to the microtubule end, where a stabilizing cap forms. Below the cap, tubulin dimers are in GDP-bound state, owing to GTPase activity of alpha-tubulin. The sequence is that of Tubulin alpha chain from Lepidoglyphus destructor (Storage mite).